We begin with the raw amino-acid sequence, 309 residues long: uncharacterized protein (309 aa).

This is an uncharacterized protein from Aquifex aeolicus (strain VF5).